The primary structure comprises 203 residues: Dephospho-CoA kinase (203 aa).

The region spanning 3 to 201 (SVGLTGGIGS…QRYLGYAAAA (199 aa)) is the DPCK domain. Position 11–16 (11–16 (GSGKTT)) interacts with ATP.

It belongs to the CoaE family.

The protein localises to the cytoplasm. The catalysed reaction is 3'-dephospho-CoA + ATP = ADP + CoA + H(+). Its pathway is cofactor biosynthesis; coenzyme A biosynthesis; CoA from (R)-pantothenate: step 5/5. Its function is as follows. Catalyzes the phosphorylation of the 3'-hydroxyl group of dephosphocoenzyme A to form coenzyme A. This Burkholderia thailandensis (strain ATCC 700388 / DSM 13276 / CCUG 48851 / CIP 106301 / E264) protein is Dephospho-CoA kinase.